Consider the following 264-residue polypeptide: Stage 0 sporulation protein A (264 aa).

Residues 5-123 (KVCLVDDNKE…NLTSHIRQVS (119 aa)) form the Response regulatory domain. Ca(2+) is bound by residues Asp-10, Asp-11, and Asp-56. A 4-aspartylphosphate modification is found at Asp-56. A DNA-binding region (H-T-H motif) is located at residues 196–215 (PDIAKKYNTTASRVERAIRH).

Requires Ca(2+) as cofactor. Post-translationally, phosphorylated by KinA and KinB.

It localises to the cytoplasm. May play the central regulatory role in sporulation. It may be an element of the effector pathway responsible for the activation of sporulation genes in response to nutritional stress. Spo0A may act in concert with Spo0H (a sigma factor) to control the expression of some genes that are critical to the sporulation process. Repressor of abrB, activator of the spoIIa operon. Binds the DNA sequence 5'-TGNCGAA-3' (0A box). This chain is Stage 0 sporulation protein A (spo0A), found in Bacillus anthracis.